Here is a 383-residue protein sequence, read N- to C-terminus: Neuropeptide Y receptor type 1 (383 aa).

Residues 1–44 are Extracellular-facing; sequence MNSTSFSQVENHSIYYNFSEKNSRFLAFENDDCHLPLAMIFTLA. Asn2, Asn11, and Asn17 each carry an N-linked (GlcNAc...) asparagine glycan. The helical transmembrane segment at 45-65 threads the bilayer; sequence LAYGAVIILGVSGNLALIIII. At 66-76 the chain is on the cytoplasmic side; sequence LKQKEMRNVTN. The helical transmembrane segment at 77–97 threads the bilayer; sequence ILIVNLSFSDLLVAIMCLPFT. Topologically, residues 98 to 116 are extracellular; it reads FVYTLMDHWVFGEAMCKLN. A disulfide bond links Cys113 and Cys198. A helical membrane pass occupies residues 117-137; the sequence is PFVQCVSITVSIFSLVLIAVE. Residues 138-154 lie on the Cytoplasmic side of the membrane; the sequence is RHQLIINPRGWRPNNRH. A helical transmembrane segment spans residues 155–175; the sequence is AYVGIAVIWVLAVASSLPFLI. Topologically, residues 176-211 are extracellular; the sequence is YQVLTDEPFQNVTLDAFKDKYVCFDKFPSDSHRLSY. A glycan (N-linked (GlcNAc...) asparagine) is linked at Asn186. A helical transmembrane segment spans residues 212–232; sequence TTLLLVLQYFGPLCFIFICYF. At 233-260 the chain is on the cytoplasmic side; it reads KIYVRLKRRNSMMDKMRDNKYRSSEAKR. The helical transmembrane segment at 261–281 threads the bilayer; the sequence is INIMLLSIVVAFAVCWLPLTI. The Extracellular portion of the chain corresponds to 282–299; sequence FNTVFDWDHQIIATCNHN. The chain crosses the membrane as a helical span at residues 300 to 320; that stretch reads LLFLLCHLTAMISTCVNPIFY. The Cytoplasmic segment spans residues 321 to 383; the sequence is GFLNKNFQRD…KIHTDDNEKI (63 aa). The S-palmitoyl cysteine moiety is linked to residue Cys338. Ser368 carries the post-translational modification Phosphoserine.

It belongs to the G-protein coupled receptor 1 family.

It is found in the cell membrane. Functionally, receptor for neuropeptide Y and peptide YY. The chain is Neuropeptide Y receptor type 1 (NPY1R) from Bos taurus (Bovine).